The sequence spans 454 residues: MTNRTCLAVILAAGEGTRMKSTLPKVLHKIGGLEMVGHVMNAASSAGADALALVVGNGAEQVRAFAEKQTADRRDIFVQEERLGTAHAVLAAREAMSRGYDDVLVVFGDHPLLDPSVLLSAREKLAEGAAVAVLGFRPPVPTGYGRLIEKEGRLVAIREEKDCSEEERKITFCNSGVMAIAGKHALALIDQVKNENAKGEYYLTDIVEIANRQGLLVVASEAGRESAVGINNRAELAEAEAVWQQKRRRELMLSGVTLIAPETVFLSYDTQIGPDTVIEPNVWFGPGVRIASGAHIHAFSHIEEAVVETGATVGPFARLRPGAQVQEKAKIGNFCEIKNARIEPGAKVPHLSYIGDATVGAGANIGAGTITCNYDGFLKHHTEIGAGAFIGTNSALVAPVTIGAGAYVASGSVLTEDVPADALAFGRARQATYEGRGKVLRDKLAEEKAKKSGG.

The segment at 1–233 is pyrophosphorylase; the sequence is MTNRTCLAVI…RESAVGINNR (233 aa). Residues 11–14, Lys25, Gln79, and 84–85 contribute to the UDP-N-acetyl-alpha-D-glucosamine site; these read LAAG and GT. Asp109 is a binding site for Mg(2+). Residues Gly145, Glu159, Asn174, and Asn231 each coordinate UDP-N-acetyl-alpha-D-glucosamine. Asn231 is a Mg(2+) binding site. Residues 234-254 are linker; sequence AELAEAEAVWQQKRRRELMLS. Residues 255 to 454 form an N-acetyltransferase region; it reads GVTLIAPETV…AEEKAKKSGG (200 aa). UDP-N-acetyl-alpha-D-glucosamine contacts are provided by Arg320 and Lys338. The active-site Proton acceptor is the His350. UDP-N-acetyl-alpha-D-glucosamine-binding residues include Tyr353 and Asn364. Acetyl-CoA contacts are provided by residues Ala367, 373-374, Ser410, and Arg427; that span reads NY.

In the N-terminal section; belongs to the N-acetylglucosamine-1-phosphate uridyltransferase family. This sequence in the C-terminal section; belongs to the transferase hexapeptide repeat family. Homotrimer. The cofactor is Mg(2+).

The protein localises to the cytoplasm. The catalysed reaction is alpha-D-glucosamine 1-phosphate + acetyl-CoA = N-acetyl-alpha-D-glucosamine 1-phosphate + CoA + H(+). The enzyme catalyses N-acetyl-alpha-D-glucosamine 1-phosphate + UTP + H(+) = UDP-N-acetyl-alpha-D-glucosamine + diphosphate. It participates in nucleotide-sugar biosynthesis; UDP-N-acetyl-alpha-D-glucosamine biosynthesis; N-acetyl-alpha-D-glucosamine 1-phosphate from alpha-D-glucosamine 6-phosphate (route II): step 2/2. Its pathway is nucleotide-sugar biosynthesis; UDP-N-acetyl-alpha-D-glucosamine biosynthesis; UDP-N-acetyl-alpha-D-glucosamine from N-acetyl-alpha-D-glucosamine 1-phosphate: step 1/1. It functions in the pathway bacterial outer membrane biogenesis; LPS lipid A biosynthesis. Catalyzes the last two sequential reactions in the de novo biosynthetic pathway for UDP-N-acetylglucosamine (UDP-GlcNAc). The C-terminal domain catalyzes the transfer of acetyl group from acetyl coenzyme A to glucosamine-1-phosphate (GlcN-1-P) to produce N-acetylglucosamine-1-phosphate (GlcNAc-1-P), which is converted into UDP-GlcNAc by the transfer of uridine 5-monophosphate (from uridine 5-triphosphate), a reaction catalyzed by the N-terminal domain. This is Bifunctional protein GlmU from Chelativorans sp. (strain BNC1).